We begin with the raw amino-acid sequence, 757 residues long: Glutathione biosynthesis bifunctional protein GshAB (757 aa).

The segment at 1-337 (MNIQQIVKEK…LGRARLGEVA (337 aa)) is glutamate--cysteine ligase. An ATP-grasp domain is found at 494 to 757 (KKVLAKAGFN…VLGMLFPELV (264 aa)). Residue 521–580 (PLFEGKAVVIKPKSTNFGLGISIFQQGVHDKADFAKAVEIAFREDKEVMVEDYLVGTEYR) coordinates ATP. Residues aspartate 702, glutamate 723, and asparagine 725 each coordinate Mg(2+). Positions 702, 723, and 725 each coordinate Mn(2+).

This sequence in the N-terminal section; belongs to the glutamate--cysteine ligase type 1 family. Type 2 subfamily. Monomer. Mg(2+) serves as cofactor. The cofactor is Mn(2+).

It carries out the reaction L-cysteine + L-glutamate + ATP = gamma-L-glutamyl-L-cysteine + ADP + phosphate + H(+). The enzyme catalyses gamma-L-glutamyl-L-cysteine + glycine + ATP = glutathione + ADP + phosphate + H(+). Its pathway is sulfur metabolism; glutathione biosynthesis; glutathione from L-cysteine and L-glutamate: step 1/2. It participates in sulfur metabolism; glutathione biosynthesis; glutathione from L-cysteine and L-glutamate: step 2/2. Synthesizes glutathione from L-glutamate and L-cysteine via gamma-L-glutamyl-L-cysteine. The chain is Glutathione biosynthesis bifunctional protein GshAB from Mannheimia succiniciproducens (strain KCTC 0769BP / MBEL55E).